A 290-amino-acid polypeptide reads, in one-letter code: AA9 family lytic polysaccharide monooxygenase A (290 aa).

The first 17 residues, 1–17, serve as a signal peptide directing secretion; it reads MKLSLLASVALVPFVSA. The Cu(2+) site is built by His-18 and His-101. A disulfide bond links Cys-67 and Cys-189. Position 176 (His-176) interacts with O2. Tyr-187 provides a ligand contact to Cu(2+). N-linked (GlcNAc...) asparagine glycans are attached at residues Asn-220 and Asn-254. Positions 240-290 are disordered; the sequence is GGSGSGSSSYSKVANVTSSDESSQSGASSSQGTVSTCPNKYNRRHARQFKP. A compositionally biased stretch (low complexity) spans 245–275; it reads GSSSYSKVANVTSSDESSQSGASSSQGTVST. Over residues 280–290 the composition is skewed to basic residues; sequence YNRRHARQFKP.

This sequence belongs to the polysaccharide monooxygenase AA9 family. It depends on Cu(2+) as a cofactor.

It localises to the secreted. It catalyses the reaction [(1-&gt;4)-beta-D-glucosyl]n+m + reduced acceptor + O2 = 4-dehydro-beta-D-glucosyl-[(1-&gt;4)-beta-D-glucosyl]n-1 + [(1-&gt;4)-beta-D-glucosyl]m + acceptor + H2O.. In terms of biological role, lytic polysaccharide monooxygenase (LPMO) that depolymerizes crystalline and amorphous polysaccharides via the oxidation of scissile alpha- or beta-(1-4)-glycosidic bonds, yielding exclusively C1 oxidation products. Catalysis by LPMOs requires the reduction of the active-site copper from Cu(II) to Cu(I) by a reducing agent and H(2)O(2) or O(2) as a cosubstrate. This is AA9 family lytic polysaccharide monooxygenase A from Aspergillus fumigatus (strain ATCC MYA-4609 / CBS 101355 / FGSC A1100 / Af293) (Neosartorya fumigata).